We begin with the raw amino-acid sequence, 210 residues long: ATP-dependent Clp protease proteolytic subunit (210 aa).

Ser107 (nucleophile) is an active-site residue. His132 is an active-site residue.

Belongs to the peptidase S14 family. Fourteen ClpP subunits assemble into 2 heptameric rings which stack back to back to give a disk-like structure with a central cavity, resembling the structure of eukaryotic proteasomes.

The protein resides in the cytoplasm. It carries out the reaction Hydrolysis of proteins to small peptides in the presence of ATP and magnesium. alpha-casein is the usual test substrate. In the absence of ATP, only oligopeptides shorter than five residues are hydrolyzed (such as succinyl-Leu-Tyr-|-NHMec, and Leu-Tyr-Leu-|-Tyr-Trp, in which cleavage of the -Tyr-|-Leu- and -Tyr-|-Trp bonds also occurs).. In terms of biological role, cleaves peptides in various proteins in a process that requires ATP hydrolysis. Has a chymotrypsin-like activity. Plays a major role in the degradation of misfolded proteins. This is ATP-dependent Clp protease proteolytic subunit from Cereibacter sphaeroides (strain ATCC 17029 / ATH 2.4.9) (Rhodobacter sphaeroides).